A 325-amino-acid chain; its full sequence is Tetraacyldisaccharide 4'-kinase (325 aa).

Thr55–Thr62 provides a ligand contact to ATP.

The protein belongs to the LpxK family.

The catalysed reaction is a lipid A disaccharide + ATP = a lipid IVA + ADP + H(+). It functions in the pathway glycolipid biosynthesis; lipid IV(A) biosynthesis; lipid IV(A) from (3R)-3-hydroxytetradecanoyl-[acyl-carrier-protein] and UDP-N-acetyl-alpha-D-glucosamine: step 6/6. In terms of biological role, transfers the gamma-phosphate of ATP to the 4'-position of a tetraacyldisaccharide 1-phosphate intermediate (termed DS-1-P) to form tetraacyldisaccharide 1,4'-bis-phosphate (lipid IVA). The chain is Tetraacyldisaccharide 4'-kinase from Cronobacter sakazakii (strain ATCC BAA-894) (Enterobacter sakazakii).